The following is a 136-amino-acid chain: Globin-2 (136 aa).

The 134-residue stretch at 1–134 folds into the Globin domain; that stretch reads VSQADIAAVQ…ILSQMKIALS (134 aa). His89 is a binding site for heme b.

It belongs to the globin family. As to quaternary structure, homodimer.

In Phreagena soyoae (Deep-sea cold-seep clam), this protein is Globin-2.